The primary structure comprises 83 residues: MSGNTGERPFADIITSIRYWVIHSITIPSLFIAGWLFVSTGLAYDVFGSPRPNEYFTESRQEIPLITGRFNSLEQVDEFTRSL.

A helical transmembrane segment spans residues 21 to 35; sequence VIHSITIPSLFIAGW. His23 provides a ligand contact to heme.

The protein belongs to the PsbE/PsbF family. As to quaternary structure, heterodimer of an alpha subunit and a beta subunit. PSII is composed of 1 copy each of membrane proteins PsbA, PsbB, PsbC, PsbD, PsbE, PsbF, PsbH, PsbI, PsbJ, PsbK, PsbL, PsbM, PsbT, PsbX, PsbY, PsbZ, Psb30/Ycf12, at least 3 peripheral proteins of the oxygen-evolving complex and a large number of cofactors. It forms dimeric complexes. Requires heme b as cofactor.

The protein resides in the plastid. Its subcellular location is the chloroplast thylakoid membrane. This b-type cytochrome is tightly associated with the reaction center of photosystem II (PSII). PSII is a light-driven water:plastoquinone oxidoreductase that uses light energy to abstract electrons from H(2)O, generating O(2) and a proton gradient subsequently used for ATP formation. It consists of a core antenna complex that captures photons, and an electron transfer chain that converts photonic excitation into a charge separation. This Huperzia lucidula (Shining clubmoss) protein is Cytochrome b559 subunit alpha.